A 305-amino-acid polypeptide reads, in one-letter code: Transmembrane epididymal protein 1A (305 aa).

The chain crosses the membrane as a helical span at residues 4 to 24; that stretch reads FIGHISPGLFLVFYGLYQAVI. Residue Asn-32 is glycosylated (N-linked (GlcNAc...) asparagine). 5 helical membrane-spanning segments follow: residues 54–74, 124–144, 159–179, 187–207, and 223–243; these read IAHA…YEIS, CVLL…LLLV, SLLI…LWAP, IETF…FILF, and IMFV…CMLG. The tract at residues 285 to 305 is disordered; the sequence is EQQDKDDQAPLLSKISPCDRA.

It belongs to the TMEM45 family.

The protein resides in the membrane. In Mus musculus (Mouse), this protein is Transmembrane epididymal protein 1A.